We begin with the raw amino-acid sequence, 242 residues long: GLIPR1-like protein 1 (242 aa).

Residues 1–22 (MALKNKFSCLWILGLCLVATTS) form the signal peptide. The 133-residue stretch at 39–171 (EAHNEWRGKV…ASTAIFVCNY (133 aa)) folds into the SCP domain. N-linked (GlcNAc...) asparagine glycosylation is present at Asn119. The GPI-anchor amidated glycine moiety is linked to residue Gly221. A propeptide spans 222–242 (RAPQQTAFNPFSLGFLLLRIF) (removed in mature form).

This sequence belongs to the CRISP family. Part of a oolemmal binding multimeric complex (IZUMO1 complex) composed at least of IZUMO1 and GLIPR1L1; the complex assemblage is influenced by the maturation status of the male germ cell. Interacts with IZUMO1. In terms of processing, N-glycosylated. N-glycosylation decreases during the transit in the caput. In terms of tissue distribution, highly expressed in testis.

Its subcellular location is the cytoplasmic vesicle. It localises to the secretory vesicle. The protein resides in the acrosome. It is found in the cell membrane. The protein localises to the membrane raft. Its subcellular location is the secreted. Required for optimal fertilization at the stage of sperm-oocyte fusion, plays a role in optimizing acrosome function, the translocation of IZUMO1 during the acrosome reaction and the fertilization process. Component of epididymosomes, one type of membranous microvesicules which mediate the transfer of lipids and proteins to spermatozoa plasma membrane during epididymal maturation. Also component of the CD9-positive microvesicules found in the cauda region. This Homo sapiens (Human) protein is GLIPR1-like protein 1 (GLIPR1L1).